Consider the following 321-residue polypeptide: Glucokinase (321 aa).

8–13 (GDVGGT) lines the ATP pocket.

It belongs to the bacterial glucokinase family.

The protein localises to the cytoplasm. It carries out the reaction D-glucose + ATP = D-glucose 6-phosphate + ADP + H(+). This is Glucokinase from Salmonella heidelberg (strain SL476).